Here is a 107-residue protein sequence, read N- to C-terminus: High mobility group protein HMG-I/HMG-Y (107 aa).

Positions 1 to 13 (MSESGSKSSQPLA) are enriched in polar residues. A disordered region spans residues 1–107 (MSESGSKSSQ…ISQESSEEEQ (107 aa)). Ser-2 carries the post-translational modification N-acetylserine. N6-acetyllysine is present on Lys-7. An ADP-ribosylserine modification is found at Ser-8. Ser-9 bears the ADP-ribosylserine; alternate mark. At Ser-9 the chain carries Phosphoserine; alternate. Lys-15 bears the N6-acetyllysine; alternate mark. A Glycyl lysine isopeptide (Lys-Gly) (interchain with G-Cter in SUMO2); alternate cross-link involves residue Lys-15. Positions 15 to 24 (KQEKDGTEKR) are enriched in basic and acidic residues. A DNA-binding region (a.T hook 1) is located at residues 21-31 (TEKRGRGRPRK). At Arg-26 the chain carries Asymmetric dimethylarginine; alternate. Position 26 is an omega-N-methylarginine; alternate (Arg-26). Arg-26 bears the Symmetric dimethylarginine; alternate mark. A Phosphoserine; by HIPK2 and CDC2 modification is found at Ser-36. Thr-39 is subject to Phosphothreonine. 2 positions are modified to phosphoserine: Ser-44 and Ser-49. Thr-53 is modified (phosphothreonine; by HIPK2 and CDC2). 2 consecutive DNA-binding regions (a.T hook) follow at residues 53-63 (TPKRPRGRPKG) and 78-89 (APGRKPRGRPKK). The segment at 53–77 (TPKRPRGRPKGSKNKGAAKTRKVTT) is interaction with HIPK2. The span at 55-74 (KRPRGRPKGSKNKGAAKTRK) shows a compositional bias: basic residues. Residues Arg-58 and Arg-60 each carry the asymmetric dimethylarginine; by PRMT6; alternate modification. Arg-58 and Arg-60 each carry omega-N-methylarginine; by PRMT6; alternate. Acidic residues predominate over residues 93–107 (EEEEGISQESSEEEQ). 3 positions are modified to phosphoserine: Ser-99, Ser-102, and Ser-103.

This sequence belongs to the HMGA family. In terms of assembly, interacts with HIPK2. Post-translationally, isoforms HMG-I and HMG-Y can be phosphorylated by HIPK2. Phosphorylation may modulate DNA-binding affinity. In terms of processing, methylation at Arg-58 is mutually exclusive with methylation at Arg-60.

The protein resides in the nucleus. It localises to the chromosome. HMG-I/Y bind preferentially to the minor groove of A+T rich regions in double-stranded DNA. It is suggested that these proteins could function in nucleosome phasing and in the 3'-end processing of mRNA transcripts. They are also involved in the transcription regulation of genes containing, or in close proximity to A+T-rich regions. The chain is High mobility group protein HMG-I/HMG-Y (Hmga1) from Mus musculus (Mouse).